The following is a 573-amino-acid chain: SHC-transforming protein 2 (573 aa).

The PID domain maps to 125 to 307 (LGPGVSYIVR…TGLEESAWGD (183 aa)). Residues 478–569 (WYHGRMSRRA…ESELHLRGVV (92 aa)) form the SH2 domain.

Interacts with the Trk receptors in a phosphotyrosine-dependent manner and MEGF12. Once activated, binds to GRB2. In terms of processing, phosphorylated on tyrosine by the Trk receptors.

In terms of biological role, signaling adapter that couples activated growth factor receptors to signaling pathway in neurons. Involved in the signal transduction pathways of neurotrophin-activated Trk receptors in cortical neurons. The protein is SHC-transforming protein 2 (Shc2) of Rattus norvegicus (Rat).